The following is a 425-amino-acid chain: Serine--tRNA ligase (425 aa).

233–235 (TAE) is an L-serine binding site. 264-266 (RAE) is a binding site for ATP. Glu-287 contacts L-serine. 351–354 (EISS) lines the ATP pocket. Ser-387 is a binding site for L-serine.

Belongs to the class-II aminoacyl-tRNA synthetase family. Type-1 seryl-tRNA synthetase subfamily. As to quaternary structure, homodimer. The tRNA molecule binds across the dimer.

The protein resides in the cytoplasm. The catalysed reaction is tRNA(Ser) + L-serine + ATP = L-seryl-tRNA(Ser) + AMP + diphosphate + H(+). It catalyses the reaction tRNA(Sec) + L-serine + ATP = L-seryl-tRNA(Sec) + AMP + diphosphate + H(+). It functions in the pathway aminoacyl-tRNA biosynthesis; selenocysteinyl-tRNA(Sec) biosynthesis; L-seryl-tRNA(Sec) from L-serine and tRNA(Sec): step 1/1. Functionally, catalyzes the attachment of serine to tRNA(Ser). Is also able to aminoacylate tRNA(Sec) with serine, to form the misacylated tRNA L-seryl-tRNA(Sec), which will be further converted into selenocysteinyl-tRNA(Sec). The chain is Serine--tRNA ligase from Clostridium perfringens (strain 13 / Type A).